We begin with the raw amino-acid sequence, 91 residues long: PqqA binding protein (91 aa).

The protein belongs to the PqqD family. In terms of assembly, monomer. Interacts with PqqE.

Its pathway is cofactor biosynthesis; pyrroloquinoline quinone biosynthesis. Functions as a PqqA binding protein and presents PqqA to PqqE, in the pyrroloquinoline quinone (PQQ) biosynthetic pathway. The protein is PqqA binding protein of Pseudomonas putida (strain W619).